The primary structure comprises 3955 residues: MERLEAKNQTTKHGERMAPQRYSVLRDEKCLFPVRNDGKLLVDEWRVTELAISSGEKGLKLCRTTCPTAGADPRYLAAAAWALLLWRFAEVDTVQIGLQDIPPGANEDILEAGLKRGMKVLAASRRQVQLLNELWQGDTWSISDADPTCYSYFDTGIVICRGNSQDCLAKCRSPNQLRKANGEACNVLLVLELDLDSNWRKCFLAYKTTVLTDIQATHLKSSFEEVVELARAGRGIPLSEICLVSRRQLDQIGKWNERALVQPKFKAMHQVVHDRATDRRHHPAVIAADRALSYSELETLSLKVAYRLRGSGVQPGDLIPVCFCKSSWAIVAMLAINKLGAAFVPLDPSQPVNRLKSITRQLDATLAVTSPENQSLVEDLVTTTVVVSETTVSELVDVHNEIVLPACDPGAPAYCLFTSGSTGKPKGCVVDHAALASVATHSHALHLGPTSRVLQFASFTFGVSLIEVWCTLAAGGTVCLPSDSDRVSRLADAIRSMGVDWCILTPTVLATLEPEAVPNLRTILVAGEPLKKAQFSLWAERARLFQAYGFTEWAGICCVSPQIRSIGDVGIIGTPANARCWLVEPGNPNQLAPIGAVAELAVEGPSLAQGYLHDPEKTAATLIPPPRWRAQYGHADGKRIYTTGDLVYYDSNGMLRYVSRKDRQVKIRGQRIDLAEPEYHIAQACCTIRNVVLDAIVPADSNGDAILVAFVLPSRDESSSNGGHDSPLFAVPDDHFTSSVRQLTSFLEDKLPDYMVPRLFLQLKETPVTITGKIARQKLREAAEALRHDELVALAGLETRVLPPNTHKETLIHQLVVELLHLPPEMVGMNHNFFSLGGDSVSVMKLVSRAKRVGLSFTVKDVFRSPQLGDLARLTDVVNSGAAQHMPPFSLLDRGAQPGLLSMAAKICQVESSMIQDIYPCTPLQEGMMTLSAAKAGSYIARFVYRLEEHVDSPRFRRAWEMTVEATPILRTRIISASDGRLYQVVIQEKFRWDDDGQPSGECVQNGQDRHMLLGEPLTHAALVRDRNQDGSLSTVFVLTMHHSVCDRWSVGLIMDSVETAYTGQTLTTNSMGPFLQYIQQLQGGDAFWRSQFVGVKAEVFPSLPSPEYTPTPTETIDLSVELRDAVPGGHTIANAIRLAWALVISHYTSCSDVVFGVTISGRAVPVPDIERIIGPIIATVPLRVRLKESSTVLEALKAIQDQSMEMIPFEQLGLRQIRKLSPEAEEACNFQSQLVVQPAWGDENRSLFATCEAGAAAEGGFAAYALSMICQLVGSSQIDVRTEFDPKVIQAPIMQRIVHHFVYTLQYLLAHPDARVAEIPVVSPGEKQLLRQWNGIVPPASHQCVHEIIQQRQIERPTSTAVWAWDGQLTYAELGELSDRLAEYLATKGVQPEVIVPVCLEKSYWTTVAMLGISKAGGAFALLDPSQPEQRLQSICHQLNSAVILTSEKNRDLAGKLASHPIVLSLQSSRRWGHGPAKQAPATARPDHTLYVAFTSGSTGTPKGVVIEHRSFCTSALALNRITGVNSESRMLQFAGYSFDGSIMEMLSALMAGACVCVPSEFQRRNELVAAAAKFELTHAHLTPSVARHLLRGNPEFTKTLVSVGEPMTASDVADWASNGQCKVMNGYGPAECAVSTTIQAAVTSASDPKNIGFPVAGVCWVVHPENHDILLPPGAVGELLIEGPTLARGYLNEPDKTAAAFIPLPAWIKDIRPEQPHGRLYKSGDLVRYNADGSFQYIGRRDSQIKLRGQRIELDEVEKHVYQCWPGVIAVVAVEMVSFTPATQTLVAFVVVEEHVDTTGDILAAPTQEFTGQVAVAQARLREAIPAFMVPEIFIPLLVLPQSASGKTDRRRLRSIATACTREKLAAYGAVGTGTKREPTSVAEREMQAIWAQALNLPLAEIGMDDSFYQLGGDSITAMQVVAHARSKGLAVTMDSILRLKSISKIMSHESSLSPAIVHIDEEEDVWFALSPIQQMFFDRQPSGWDRFSQVFLLRVSQPVTASQLQMALHTLVSKHPMLRARFAKQHDGSWRQVITSKIQESYRCRSHRLNRRSSVDGVVSSGACSLSIQKGPLIAVDLMSREDGAQYLSIVIHHLVVDLVSWRIILADLEAMLRGENPMANHSTPFQTWCRLQAEYARQYLSPQHAFPTDLPDHYHQDPSVFWGLAGQPNLVRDSRRQVFTLDEHTTRQLLGAANAAFATRTDEVLHAVLLYSFLKVFPHRIAPLTFSEGHGREPWDSAIDLSQTVGWFTTMWPVVAELQQNHSFLEVVCRVKDARRAVPCNGWAYFVSRYLNPSGRQAFQQFHPVELVFNYAGEYQQFNQAGAFFIPDMPEYQGSLDAGEQIQRFGIFEVFASVVRGCLQFQFMYNRYMKHQLEIQKWIESCRQTLIEGCSTLIAAKPSRTLSDFPLLPLTYSTLRELLDVTLPTAGVSVENVEDIYPCSPSQRGMLIAQAKAAHNYNASVTWSIRSRIDSRPNVARLKAAWCEVVKRHAILRTVFVESPWPESYMDQVVLQNVSPEFVFCRGSDSLPQSISSPGQTRWSKGQCQHIMRVWERDNGDILCRLDLSHAIMDRTTLAIIQKDLSLAYDERLLPGRAPLYRDYISYIYQQDSESARQYWQGYLEGVEPCEFPTLNPVDPSITKEWGNLYRTLEDRRRLEEFCRTHSVTPWNVAGLAWAMVLRSFTRTDSVCFGYVKSGRDLPIDGIAGTAGPVFNPLPCRVHLTERLTVRETIGRLQEEYLQSLAHQSFPLSDIHRLAGVTSGVLFNTSVAVQTEVASEAEEAKRSLEFTTVAMEDGTEDDMVITLVPRGGELVLHLRHRSRTLTTDQASTVLATFEKALCSILANAEAPMTSIDVFSDHDKAILWSRNRRVPDAVESCVHELIQKHCVERPHSPAVNAWDGAFTYGQLDELSSRLAVYLAAQGVGPNVVVPLCFEKTRWTPIAMMGVMKAGGAFLLLDPSYPLQRLKDICADIDCRLVVSSTTHEAMSRELASTVVVVGEDRHHWQLENTSHTITMPKVRPADALYVVFTSGSTGKPKGVVIEHRSYCSGALDHIRSYNLTPQSRVLQFSSYAFDISIVEQLSVLIAGGCICVISESQRKNSLGEAATALQANHAMLIPSVARLVRHEDLSTITSLSLAGECMQETDVSYWAQHVRLMNGYGPAECSALSLVQPCVLPHSDPHDIGYPVGSVAWVVDPHDHHKLVPNGAVGELLIEGPIVGRGYINNAEKTAEVFIEPPTWLRTLRGHCTSRLYKTGDLVRANPSGSLSILGRKDRQVKLRGQRLELGEVEANVQHCFPGALDVVADLLPSSRGGKPQLVAMVFQNAERAARIAPESDSKLIAEPSVDFMQSATTAETRLRQTVPNFMVPSMFLPLAQIPRTHSDKVDRNSLLKAVAAMSSIELQAYKASVDAGHCSTRAPSTEEEKKLAEIWADVLKVPVEHIGADDNFLLSGGDSIDAMKAAAFCRAAGMALSVADIFAHPVLSDLAKVAVPKSLNGSSTSHQPFSLSPVDSPKDLHMSLMEQGLVPPGSALADLLPGTQAQQFFIERGTFHSYNFSIRGPLDRCRLQKTCTAILSRHSILRTKFLQYEGRLIQIVLDNLETPFTHYTTDGDLLEFCKSLWERDLAALDGLGRLPCKFTLVSRSEQEHVFTIQISHAQWDGVSIPRLFSDIAAIYNQIPLPSTTHFADYVYHRSSRDERPAFDFWKKYLRGSSMPVPFPATNCQDREHKTQWTFQGIKNPRLPAGITMASLVKAACGFHLCQLLSQNDVVFGHTVNGRNLALDNVEALLGCCLNFIPLRVMLQPSWTVLDLLAHVQEQYTRALPHEHLELRDIFRHSTPWPADTQLSFIVQHQNIELHHNIALDGLQVQYSKFAQFDPLTEVWIFSEPHPDRLEIQVCANTRVLSEDQARALCRRLCDLIEFFSASPDCPLSKVVDHMDRPGLLAEEKVLN.

The tract at residues 293–691 (SYSELETLSL…AQACCTIRNV (399 aa)) is adenylation 1. Residues 806 to 879 (THKETLIHQL…DLARLTDVVN (74 aa)) form the Carrier 1 domain. O-(pantetheine 4'-phosphoryl)serine is present on S840. The interval 916 to 1187 (QDIYPCTPLQ…IATVPLRVRL (272 aa)) is condensation 1. Residues 1371–1766 (TYAELGELSD…DEVEKHVYQC (396 aa)) are adenylation 2. The region spanning 1880-1956 (EPTSVAEREM…KIMSHESSLS (77 aa)) is the Carrier 2 domain. S1917 bears the O-(pantetheine 4'-phosphoryl)serine mark. The segment at 1970-2261 (FALSPIQQMF…FTTMWPVVAE (292 aa)) is epimerase. The tract at residues 2438 to 2724 (EDIYPCSPSQ…FNPLPCRVHL (287 aa)) is condensation 2. The tract at residues 2906–3299 (TYGQLDELSS…GEVEANVQHC (394 aa)) is adenylation 3. The 77-residue stretch at 3422–3498 (APSTEEEKKL…DLAKVAVPKS (77 aa)) folds into the Carrier 3 domain. O-(pantetheine 4'-phosphoryl)serine is present on S3459. The interval 3541-3805 (PGTQAQQFFI…CLNFIPLRVM (265 aa)) is condensation 3.

Belongs to the NRP synthetase family. Interacts with the mitogen-activated protein kinase mpkA.

Its subcellular location is the cytoplasmic vesicle. The protein operates within alkaloid biosynthesis. Functionally, nonribosomal peptide synthetase; part of the gene cluster that mediates the biosynthesis of the antitumor fumiquinazolines that confer a dual-usage capability to defend against phagocytes in the environment and animal hosts. The simplest member is fumiquinazoline F (FQF) with a 6-6-6 tricyclic core derived from anthranilic acid (Ant), tryptophan (Trp), and alanine (Ala). The trimodular NRPS fmqA is responsible for FQF formation. Modules 1, 2 and 3 of fmqA are predicted to activate and load Ant, Trp and Ala, respectively, providing for the assembly of an Ant-Trp-Ala-S-enzyme intermediate that would undergo double cyclization for chain release and generation of the tricyclic 6-6-6 product fumiquinazoline F. The presence of an E domain predicted for module 2 of fmqA is consistent with epimerization of L-Trp to D-Trp during assembly to generate the R-stereocenter at C14 of FQF. The FAD-dependent monooxygenase fmqB and the monomodular NRPS fmqC then maturate FQF to FQA. FmqB oxidizes the 2',3'-double bond of the indole side chain of FQF, and fmqC activates L-Ala as the adenylate, installs it as the pantetheinyl thioester on its carrier protein domain, and acylates the oxidized indole for subsequent intramolecular cyclization to create the 6-5-5-imidazolindolone of FQA. The FAD-linked oxidoreductase fmqD introduces a third layer of scaffold complexity by converting FQA to the spirohemiaminal FQC, presumably by catalyzing the formation of a transient imine within the pyrazinone ring. FQC subsequently converts nonenzymatically to the known cyclic aminal FQD. This is Nonribosomal peptide synthetase fmqA from Aspergillus fumigatus (strain ATCC MYA-4609 / CBS 101355 / FGSC A1100 / Af293) (Neosartorya fumigata).